A 468-amino-acid chain; its full sequence is UDP-N-acetylmuramate--L-alanine ligase (468 aa).

Position 112 to 118 (112 to 118) interacts with ATP; the sequence is GTHGKTT.

The protein belongs to the MurCDEF family.

It is found in the cytoplasm. The enzyme catalyses UDP-N-acetyl-alpha-D-muramate + L-alanine + ATP = UDP-N-acetyl-alpha-D-muramoyl-L-alanine + ADP + phosphate + H(+). The protein operates within cell wall biogenesis; peptidoglycan biosynthesis. Its function is as follows. Cell wall formation. This Bordetella avium (strain 197N) protein is UDP-N-acetylmuramate--L-alanine ligase.